The sequence spans 178 residues: FMN reductase (NADH) RutF (178 aa).

It belongs to the non-flavoprotein flavin reductase family. RutF subfamily.

The catalysed reaction is FMNH2 + NAD(+) = FMN + NADH + 2 H(+). Catalyzes the reduction of FMN to FMNH2 which is used to reduce pyrimidine by RutA via the Rut pathway. This chain is FMN reductase (NADH) RutF, found in Pseudomonas syringae pv. syringae (strain B728a).